The sequence spans 183 residues: MSQPAKVLLLYAHPESQDSVANRVLLKPATQLSNVTVHDLYAHYPDFFIDIPREQALLREHEVIVFQHPLYTYSCPALLKEWLDRVLSRGFASGPGGNQLAGKYWRNVITTGEPESAYRYDALNRYPMSDVLRPFELAAGMCRMHWLSPIIIYWARRQSAKELASHARAYGDWLANPLSPGGR.

It belongs to the NAD(P)H dehydrogenase (quinone) family. KefG subfamily. As to quaternary structure, interacts with KefB.

Its subcellular location is the cell inner membrane. It carries out the reaction a quinone + NADH + H(+) = a quinol + NAD(+). It catalyses the reaction a quinone + NADPH + H(+) = a quinol + NADP(+). Functionally, regulatory subunit of a potassium efflux system that confers protection against electrophiles. Required for full activity of KefB. This is Glutathione-regulated potassium-efflux system ancillary protein KefG from Shigella flexneri serotype 5b (strain 8401).